The chain runs to 253 residues: Phosphate import ATP-binding protein PstB 1 (253 aa).

Residues 7–248 (LTVSDLSLYY…PEKQETSDYI (242 aa)) enclose the ABC transporter domain. 39–46 (GPSGCGKS) contacts ATP.

Belongs to the ABC transporter superfamily. Phosphate importer (TC 3.A.1.7) family. The complex is composed of two ATP-binding proteins (PstB), two transmembrane proteins (PstC and PstA) and a solute-binding protein (PstS).

Its subcellular location is the cell membrane. It catalyses the reaction phosphate(out) + ATP + H2O = ADP + 2 phosphate(in) + H(+). Part of the ABC transporter complex PstSACB involved in phosphate import. Responsible for energy coupling to the transport system. The protein is Phosphate import ATP-binding protein PstB 1 of Lactococcus lactis subsp. lactis (strain IL1403) (Streptococcus lactis).